Here is a 262-residue protein sequence, read N- to C-terminus: Glucosamine-6-phosphate deaminase (262 aa).

The Proton acceptor; for enolization step role is filled by aspartate 63. Catalysis depends on asparagine 129, which acts as the For ring-opening step. Histidine 131 (proton acceptor; for ring-opening step) is an active-site residue. Catalysis depends on glutamate 136, which acts as the For ring-opening step.

Belongs to the glucosamine/galactosamine-6-phosphate isomerase family. NagB subfamily.

The catalysed reaction is alpha-D-glucosamine 6-phosphate + H2O = beta-D-fructose 6-phosphate + NH4(+). The protein operates within amino-sugar metabolism; N-acetylneuraminate degradation; D-fructose 6-phosphate from N-acetylneuraminate: step 5/5. Its function is as follows. Catalyzes the reversible isomerization-deamination of glucosamine 6-phosphate (GlcN6P) to form fructose 6-phosphate (Fru6P) and ammonium ion. This is Glucosamine-6-phosphate deaminase from Bacillus cereus (strain ZK / E33L).